Reading from the N-terminus, the 890-residue chain is DNA mismatch repair protein MutS (890 aa).

ATP is bound at residue 645-652 (GPNMAGKS).

It belongs to the DNA mismatch repair MutS family.

This protein is involved in the repair of mismatches in DNA. It is possible that it carries out the mismatch recognition step. This protein has a weak ATPase activity. This chain is DNA mismatch repair protein MutS, found in Rickettsia rickettsii (strain Iowa).